Consider the following 198-residue polypeptide: Recombination protein RecR (198 aa).

The C4-type zinc finger occupies 58 to 73; it reads CSVCGNYTDTDPCAIC. In terms of domain architecture, Toprim spans 81-175; that stretch reads SLVCVVEEPK…KVTRIAHGIP (95 aa).

Belongs to the RecR family.

Its function is as follows. May play a role in DNA repair. It seems to be involved in an RecBC-independent recombinational process of DNA repair. It may act with RecF and RecO. The chain is Recombination protein RecR from Clostridium acetobutylicum (strain ATCC 824 / DSM 792 / JCM 1419 / IAM 19013 / LMG 5710 / NBRC 13948 / NRRL B-527 / VKM B-1787 / 2291 / W).